The following is a 330-amino-acid chain: Aspartate--ammonia ligase (330 aa).

This sequence belongs to the class-II aminoacyl-tRNA synthetase family. AsnA subfamily.

Its subcellular location is the cytoplasm. The enzyme catalyses L-aspartate + NH4(+) + ATP = L-asparagine + AMP + diphosphate + H(+). The protein operates within amino-acid biosynthesis; L-asparagine biosynthesis; L-asparagine from L-aspartate (ammonia route): step 1/1. The polypeptide is Aspartate--ammonia ligase (Treponema pallidum (strain Nichols)).